The sequence spans 1947 residues: DNA-directed RNA polymerase subunit beta' (1947 aa).

Cys-119, Cys-121, Cys-141, and Cys-144 together coordinate Zn(2+). Mg(2+)-binding residues include Asp-1778, Asp-1780, and Asp-1782.

Belongs to the RNA polymerase beta' chain family. RpoC1 subfamily. In plastids the minimal PEP RNA polymerase catalytic core is composed of four subunits: alpha, beta, beta', and beta''. When a (nuclear-encoded) sigma factor is associated with the core the holoenzyme is formed, which can initiate transcription. The cofactor is Mg(2+). Zn(2+) is required as a cofactor.

It localises to the plastid. It is found in the chloroplast. It carries out the reaction RNA(n) + a ribonucleoside 5'-triphosphate = RNA(n+1) + diphosphate. DNA-dependent RNA polymerase catalyzes the transcription of DNA into RNA using the four ribonucleoside triphosphates as substrates. This Oedogonium cardiacum (Filamentous green alga) protein is DNA-directed RNA polymerase subunit beta'.